The primary structure comprises 314 residues: Very long chain fatty acid elongase 4 (314 aa).

Residue asparagine 20 is glycosylated (N-linked (GlcNAc...) asparagine). Transmembrane regions (helical) follow at residues 42-62 (LMQS…FVWL), 78-98 (VLII…RELF), 127-147 (ALWW…FFIL), 165-185 (MFTL…FFGA), 188-208 (NSFI…GPWI), 217-237 (YLTM…ALSL), and 247-267 (MHWA…NFYI). The segment at 275–314 (KPKAGKTAMNGISANGVSKSEKQLMIENGKKQKNGKAKGD) is disordered. Residues 293 to 304 (KSEKQLMIENGK) are compositionally biased toward basic and acidic residues. The segment covering 305–314 (KQKNGKAKGD) has biased composition (basic residues). A Di-lysine motif motif is present at residues 310-314 (KAKGD).

It belongs to the ELO family. ELOVL4 subfamily. Oligomer. N-glycosylated. As to expression, expressed in the retina and at much lower level in the brain. Ubiquitous, highest expression in thymus, followed by testis, small intestine, ovary, and prostate. Little or no expression in heart, lung, liver, or leukocates.

The protein localises to the endoplasmic reticulum membrane. The enzyme catalyses a very-long-chain acyl-CoA + malonyl-CoA + H(+) = a very-long-chain 3-oxoacyl-CoA + CO2 + CoA. The catalysed reaction is tetracosanoyl-CoA + malonyl-CoA + H(+) = 3-oxohexacosanoyl-CoA + CO2 + CoA. It carries out the reaction hexacosanoyl-CoA + malonyl-CoA + H(+) = 3-oxooctacosanyol-CoA + CO2 + CoA. It catalyses the reaction octacosanoyl-CoA + malonyl-CoA + H(+) = 3-oxo-triacontanoyl-CoA + CO2 + CoA. The enzyme catalyses triacontanoyl-CoA + malonyl-CoA + H(+) = 3-oxo-dotriacontanoyl-CoA + CO2 + CoA. The catalysed reaction is (19Z,22Z,25Z,28Z,31Z)-tetratriacontapentaenoyl-CoA + malonyl-CoA + H(+) = 3-oxo-(21Z,24Z,27Z,30Z,33Z)-hexatriacontapentaenoyl-CoA + CO2 + CoA. It carries out the reaction (4Z,7Z,10Z,13Z,16Z,19Z)-docosahexaenoyl-CoA + malonyl-CoA + H(+) = 3-oxo-(6Z,9Z,12Z,15Z,18Z,21Z)-tetracosahexaenoyl-CoA + CO2 + CoA. It catalyses the reaction (7Z,10Z,13Z,16Z)-docosatetraenoyl-CoA + malonyl-CoA + H(+) = (9Z,12Z,15Z,18Z)-3-oxotetracosatetraenoyl-CoA + CO2 + CoA. The enzyme catalyses (11Z,14Z,17Z,20Z,23Z)-hexacosapentaenoyl-CoA + malonyl-CoA + H(+) = 3-oxo-(13Z,16Z,19Z,22Z,25Z)-octacosapentaenoyl-CoA + CO2 + CoA. The catalysed reaction is (13Z,16Z,19Z,22Z,25Z)-octacosapentaenoyl-CoA + malonyl-CoA + H(+) = 3-oxo-(15Z,18Z,21Z,24Z,27Z)-triacontapentaenoyl-CoA + CO2 + CoA. It carries out the reaction (15Z,18Z,21Z,24Z,27Z)-triacontapentaenoyl-CoA + malonyl-CoA + H(+) = 3-oxo-(17Z,20Z,23Z,26Z,29Z)-dotriacontapentaenoyl-CoA + CO2 + CoA. It catalyses the reaction (17Z,20Z,23Z,26Z,29Z)-dotriacontapentaenoyl-CoA + malonyl-CoA + H(+) = 3-oxo-(19Z,22Z,25Z,28Z,31Z)-tetratriacontapentaenoyl-CoA + CO2 + CoA. The enzyme catalyses (21Z,24Z,27Z,30Z,33Z)-hexatriacontapentaenoyl-CoA + malonyl-CoA + H(+) = 3-oxo-(23Z,26Z,29Z,32Z,35Z)-octatriacontapentaenoyl-CoA + CO2 + CoA. The catalysed reaction is (11Z,14Z,17Z,20Z)-hexacosatetraenoyl-CoA + malonyl-CoA + H(+) = (13Z,16Z,19Z,22Z)-3-oxooctacosatetraenoyl-CoA + CO2 + CoA. It carries out the reaction (13Z,16Z,19Z,22Z)-octacosatetraenoyl-CoA + malonyl-CoA + H(+) = 3-oxo-(15Z,18Z,21Z,24Z)-triacontatetraenoyl-CoA + CO2 + CoA. It catalyses the reaction (15Z,18Z,21Z,24Z)-triacontatetraenoyl-CoA + malonyl-CoA + H(+) = 3-oxo-(17Z,20Z,23Z,26Z)-dotriacontatetraenoyl-CoA + CO2 + CoA. The enzyme catalyses (17Z,20Z,23Z,26Z)-dotriacontatetraenoyl-CoA + malonyl-CoA + H(+) = 3-oxo-(19Z,22Z,25Z,28Z)-tetratriacontatetraenoyl-CoA + CO2 + CoA. The catalysed reaction is (19Z,22Z,25Z,28Z)-tetratriacontatetraenoyl-CoA + malonyl-CoA + H(+) = 3-oxo-(21Z,24Z,27Z,30Z)-hexatriacontatetraenoyl-CoA + CO2 + CoA. It carries out the reaction (21Z,24Z,27Z,30Z)-hexatriacontatetraenoyl-CoA + malonyl-CoA + H(+) = 3-oxo-(23Z,26Z,29Z,32Z)-octatriacontatetraenoyl-CoA + CO2 + CoA. It catalyses the reaction (6Z,9Z,12Z,15Z,18Z,21Z)-tetracosahexaenoyl-CoA + malonyl-CoA + H(+) = 3-oxo-(8Z,11Z,14Z,17Z,20Z,23Z)-hexacosahexaenoyl-CoA + CO2 + CoA. The enzyme catalyses (8Z,11Z,14Z,17Z,20Z,23Z)-hexacosahexaenoyl-CoA + malonyl-CoA + H(+) = 3-oxo-(10Z,13Z,16Z,19Z,22Z,25Z)-octacosahexaenoyl-CoA + CO2 + CoA. The catalysed reaction is (10Z,13Z,16Z,19Z,22Z,25Z)-octacosahexaenoyl-CoA + malonyl-CoA + H(+) = 3-oxo-(12Z,15Z,18Z,21Z,24Z,27Z)-triacontahexaenoyl-CoA + CO2 + CoA. It carries out the reaction (12Z,15Z,18Z,21Z,24Z,27Z)-triacontahexaenoyl-CoA + malonyl-CoA + H(+) = 3-oxo-(14Z,17Z,20Z,23Z,26Z,29Z)-dotriacontahexaenoyl-CoA + CO2 + CoA. It catalyses the reaction (14Z,17Z,20Z,23Z,26Z,29Z)-dotriacontahexaenoyl-CoA + malonyl-CoA + H(+) = 3-oxo-(16Z,19Z,22Z,25Z,28Z,31Z)-tetratriacontahexaenoyl-CoA + CO2 + CoA. The enzyme catalyses (16Z,19Z,22Z,25Z,28Z,31Z)-tetratriacontahexaenoyl-CoA + malonyl-CoA + H(+) = 3-oxo-(18Z,21Z,24Z,27Z,30Z,33Z)-hexatriacontahexaenoyl-CoA + CO2 + CoA. The catalysed reaction is (9Z,12Z,15Z,18Z,21Z)-tetracosapentaenoyl-CoA + malonyl-CoA + H(+) = 3-oxo-(11Z,14Z,17Z,20Z,23Z)-hexacosapentaenoyl-CoA + CO2 + CoA. It participates in lipid metabolism; fatty acid biosynthesis. Catalyzes the first and rate-limiting reaction of the four reactions that constitute the long-chain fatty acids elongation cycle. This endoplasmic reticulum-bound enzymatic process allows the addition of 2 carbons to the chain of long- and very long-chain fatty acids (VLCFAs) per cycle. Condensing enzyme that catalyzes the synthesis of very long chain saturated (VLC-SFA) and polyunsaturated (PUFA) fatty acids that are involved in multiple biological processes as precursors of membrane lipids and lipid mediators. May play a critical role in early brain and skin development. The chain is Very long chain fatty acid elongase 4 from Homo sapiens (Human).